The following is a 397-amino-acid chain: 1-deoxy-D-xylulose 5-phosphate reductoisomerase (397 aa).

NADPH-binding residues include Thr10, Gly11, Ser12, Ile13, Gln38, and Asn123. Lys124 contacts 1-deoxy-D-xylulose 5-phosphate. Residue Glu125 coordinates NADPH. Mn(2+) is bound at residue Asp149. 4 residues coordinate 1-deoxy-D-xylulose 5-phosphate: Ser150, Glu151, Ser185, and His208. Glu151 lines the Mn(2+) pocket. Gly214 lines the NADPH pocket. 1-deoxy-D-xylulose 5-phosphate-binding residues include Ser221, Asn226, Lys227, and Glu230. A Mn(2+)-binding site is contributed by Glu230.

Belongs to the DXR family. Mg(2+) serves as cofactor. The cofactor is Mn(2+).

It catalyses the reaction 2-C-methyl-D-erythritol 4-phosphate + NADP(+) = 1-deoxy-D-xylulose 5-phosphate + NADPH + H(+). Its pathway is isoprenoid biosynthesis; isopentenyl diphosphate biosynthesis via DXP pathway; isopentenyl diphosphate from 1-deoxy-D-xylulose 5-phosphate: step 1/6. Functionally, catalyzes the NADPH-dependent rearrangement and reduction of 1-deoxy-D-xylulose-5-phosphate (DXP) to 2-C-methyl-D-erythritol 4-phosphate (MEP). In Idiomarina loihiensis (strain ATCC BAA-735 / DSM 15497 / L2-TR), this protein is 1-deoxy-D-xylulose 5-phosphate reductoisomerase.